Here is a 215-residue protein sequence, read N- to C-terminus: MKTVLLTGFDPFGGESINPAWEVAKSLHEKTIGEYKIISKQVPTVFHKSISVLKEYIEELAPEFIICMGQAGGRPDITIERVAINIDDARIADNEGNQPVDVPVVEEGPAAYWSTLPMKAIVKKLQEEGIPASVSQTAGTFVCNHLFYGLMHELEKHDTKMKGGFIHIPFLPEQASNYPGQPSMSLSTIRKGIGLAVEVTMTVEVDIVEVGGTTH.

Catalysis depends on residues glutamate 80, cysteine 143, and histidine 167.

Belongs to the peptidase C15 family. In terms of assembly, homotetramer.

Its subcellular location is the cytoplasm. It catalyses the reaction Release of an N-terminal pyroglutamyl group from a polypeptide, the second amino acid generally not being Pro.. Its function is as follows. Removes 5-oxoproline from various penultimate amino acid residues except L-proline. The chain is Pyrrolidone-carboxylate peptidase from Bacillus thuringiensis subsp. konkukian (strain 97-27).